Consider the following 386-residue polypeptide: MGLQGLCRLMSRFNSYKRTNIILQHLKMSNHTDAAAEVLLERKGCAGVITLNRPRFLNTLTLGMIRQIYAQLKKWEQDPKTFLIIIKGAGEKAFCAGGDIRALSEARNTNQKMLQDLFREEYILNNAIDSCQKPYIALIHGITMGGGVGVSVHGQFRVATEKSVFAMPETAIGLFPDVGGGYFLPRLQGKLGYFLALTGFRLKGRDVYTAGIATHFVDFEKLGMLEEDLLALKSPSKENIADVLETYHAKSKTDQDKPFILEEHMDKINSWFSANTVEQIVDNLQQDGSSFALEQLKVIKKMSPTSLKITLRQLMEGSSKTLPEVLIMEYRLSQACMKGHDFHEGVRAVLIDKDQSPKWKPADLKEVTDEDLNDYFKSLGSNDLKF.

Residues 1–32 constitute a mitochondrion transit peptide; sequence MGLQGLCRLMSRFNSYKRTNIILQHLKMSNHT. Lys-92 carries the N6-acetyllysine; alternate modification. N6-succinyllysine; alternate is present on Lys-92. Glu-121, Gly-146, Glu-169, and Asp-177 together coordinate substrate. An N6-acetyllysine; alternate modification is found at Lys-221. Lys-221 is modified (N6-succinyllysine; alternate). The residue at position 234 (Ser-234) is a Phosphoserine. Residues Lys-250 and Lys-257 each carry the N6-succinyllysine modification. Position 297 is an N6-acetyllysine; alternate (Lys-297). The residue at position 297 (Lys-297) is an N6-succinyllysine; alternate. N6-succinyllysine is present on Lys-301. Residue Lys-353 is modified to N6-acetyllysine; alternate. At Lys-353 the chain carries N6-succinyllysine; alternate. At Ser-356 the chain carries Phosphoserine. Residues Lys-360 and Lys-365 each carry the N6-acetyllysine modification. Lys-377 is modified (N6-succinyllysine).

Belongs to the enoyl-CoA hydratase/isomerase family.

The protein localises to the mitochondrion. The catalysed reaction is 3-hydroxy-2-methylpropanoyl-CoA + H2O = 3-hydroxy-2-methylpropanoate + CoA + H(+). The protein operates within amino-acid degradation; L-valine degradation. Hydrolyzes 3-hydroxyisobutyryl-CoA (HIBYL-CoA), a saline catabolite. Has high activity toward isobutyryl-CoA. Could be an isobutyryl-CoA dehydrogenase that functions in valine catabolism. Also hydrolyzes 3-hydroxypropanoyl-CoA. This Bos taurus (Bovine) protein is 3-hydroxyisobutyryl-CoA hydrolase, mitochondrial (HIBCH).